A 248-amino-acid polypeptide reads, in one-letter code: 1-(5-phosphoribosyl)-5-[(5-phosphoribosylamino)methylideneamino] imidazole-4-carboxamide isomerase (248 aa).

D7 serves as the catalytic Proton acceptor. Residue D129 is the Proton donor of the active site.

The protein belongs to the HisA/HisF family.

Its subcellular location is the cytoplasm. The catalysed reaction is 1-(5-phospho-beta-D-ribosyl)-5-[(5-phospho-beta-D-ribosylamino)methylideneamino]imidazole-4-carboxamide = 5-[(5-phospho-1-deoxy-D-ribulos-1-ylimino)methylamino]-1-(5-phospho-beta-D-ribosyl)imidazole-4-carboxamide. It participates in amino-acid biosynthesis; L-histidine biosynthesis; L-histidine from 5-phospho-alpha-D-ribose 1-diphosphate: step 4/9. The chain is 1-(5-phosphoribosyl)-5-[(5-phosphoribosylamino)methylideneamino] imidazole-4-carboxamide isomerase from Aeromonas salmonicida (strain A449).